We begin with the raw amino-acid sequence, 92 residues long: UPF0728 protein (92 aa).

It belongs to the UPF0728 family.

The protein is UPF0728 protein of Branchiostoma floridae (Florida lancelet).